We begin with the raw amino-acid sequence, 69 residues long: Parvalbumin beta 3 (69 aa).

Position 1 is an N-acetylalanine (A1). In terms of domain architecture, EF-hand spans 24 to 59 (FNYKTFFKFFAIIDQDHSGFIEEEELKLFLQTFSAG). Residues D37, D39, S41, F43, E45, and E48 each contribute to the Ca(2+) site.

The protein belongs to the parvalbumin family.

Its function is as follows. In muscle, parvalbumin is thought to be involved in relaxation after contraction. It binds two calcium ions. The protein is Parvalbumin beta 3 of Merluccius polli (Benguela hake).